We begin with the raw amino-acid sequence, 809 residues long: G-type lectin S-receptor-like serine/threonine-protein kinase At1g61480 (809 aa).

Residues 1–24 (MGKKRIMFFASLLLITIFLSFSYA) form the signal peptide. Residues 25-144 (GITRESPLSI…NSGRTLWESF (120 aa)) enclose the Bulb-type lectin domain. Residues 25–425 (GITRESPLSI…SELGGNKRNK (401 aa)) are Extracellular-facing. Residues Asn-53, Asn-88, Asn-94, Asn-103, Asn-117, Asn-134, and Asn-236 are each glycosylated (N-linked (GlcNAc...) asparagine). The 37-residue stretch at 278 to 314 (PENSCDIYGFCGPFGICVMSVPPKCKCFKGFVPKSIE) folds into the EGF-like domain. 2 disulfide bridges follow: Cys-282-Cys-294 and Cys-288-Cys-302. 2 N-linked (GlcNAc...) asparagine glycosylation sites follow: Asn-320 and Asn-375. The PAN domain maps to 333–415 (CQGNTNGKTV…GEILSIRLAS (83 aa)). 2 cysteine pairs are disulfide-bonded: Cys-368–Cys-389 and Cys-372–Cys-378. A helical transmembrane segment spans residues 426–446 (IIVASIVSLSLFVILAFAAFC). The Cytoplasmic segment spans residues 447–809 (FLRYKVKHTV…EMTQSVILGR (363 aa)). One can recognise a Protein kinase domain in the interval 496–781 (FSLSNKLGQG…DLTSPKQPTF (286 aa)). ATP-binding positions include 502 to 510 (LGQGGFGSV) and Lys-524. 2 positions are modified to phosphoserine: Ser-530 and Ser-545. Residues 585-602 (RKRLEIDWPKRFNIIEGI) form a caM-binding region. Asp-621 acts as the Proton acceptor in catalysis. Residues Ser-625 and Ser-638 each carry the phosphoserine modification. Residue Thr-655 is modified to Phosphothreonine. Phosphoserine occurs at positions 698 and 792.

This sequence belongs to the protein kinase superfamily. Ser/Thr protein kinase family.

The protein resides in the cell membrane. The catalysed reaction is L-seryl-[protein] + ATP = O-phospho-L-seryl-[protein] + ADP + H(+). It catalyses the reaction L-threonyl-[protein] + ATP = O-phospho-L-threonyl-[protein] + ADP + H(+). The sequence is that of G-type lectin S-receptor-like serine/threonine-protein kinase At1g61480 from Arabidopsis thaliana (Mouse-ear cress).